Consider the following 510-residue polypeptide: Light-independent protochlorophyllide reductase subunit B (510 aa).

Residue aspartate 36 participates in [4Fe-4S] cluster binding. Aspartate 296 acts as the Proton donor in catalysis. 431–432 (GM) lines the substrate pocket.

The protein belongs to the ChlB/BchB/BchZ family. In terms of assembly, protochlorophyllide reductase is composed of three subunits; ChlL, ChlN and ChlB. Forms a heterotetramer of two ChlB and two ChlN subunits. [4Fe-4S] cluster is required as a cofactor.

It is found in the plastid. The protein resides in the chloroplast. It carries out the reaction chlorophyllide a + oxidized 2[4Fe-4S]-[ferredoxin] + 2 ADP + 2 phosphate = protochlorophyllide a + reduced 2[4Fe-4S]-[ferredoxin] + 2 ATP + 2 H2O. Its pathway is porphyrin-containing compound metabolism; chlorophyll biosynthesis (light-independent). In terms of biological role, component of the dark-operative protochlorophyllide reductase (DPOR) that uses Mg-ATP and reduced ferredoxin to reduce ring D of protochlorophyllide (Pchlide) to form chlorophyllide a (Chlide). This reaction is light-independent. The NB-protein (ChlN-ChlB) is the catalytic component of the complex. In Auxenochlorella protothecoides (Green microalga), this protein is Light-independent protochlorophyllide reductase subunit B.